Consider the following 228-residue polypeptide: 2-C-methyl-D-erythritol 4-phosphate cytidylyltransferase (228 aa).

This sequence belongs to the IspD/TarI cytidylyltransferase family. IspD subfamily.

It carries out the reaction 2-C-methyl-D-erythritol 4-phosphate + CTP + H(+) = 4-CDP-2-C-methyl-D-erythritol + diphosphate. Its pathway is isoprenoid biosynthesis; isopentenyl diphosphate biosynthesis via DXP pathway; isopentenyl diphosphate from 1-deoxy-D-xylulose 5-phosphate: step 2/6. In terms of biological role, catalyzes the formation of 4-diphosphocytidyl-2-C-methyl-D-erythritol from CTP and 2-C-methyl-D-erythritol 4-phosphate (MEP). The polypeptide is 2-C-methyl-D-erythritol 4-phosphate cytidylyltransferase (Geobacillus kaustophilus (strain HTA426)).